We begin with the raw amino-acid sequence, 273 residues long: MTIAAAGTRPQRAEGRGHLAAKLFDGRTRIRELYQEGAAKIRLPDTFDASMEAVIINTAGGLTGGDRMDWSVDAGPGTRIDVTTQACEKIYKASAGIAEVATSIKVGAQARVDWLPQETILFDRAALFRRLDVDLDESAEFLAVEAVLLGRKAMGEAVVSGLFRDRWRIRRSGQLIHAEELRLSEGVAALAARQAVLGGQVAFATLLYAGPLLEAYLSKVRPLVEGSMGGASAWNGKLVVRLAAADGFSLRKILIPVISALRNGAPVPKVWNL.

The protein belongs to the UreD family. As to quaternary structure, ureD, UreF and UreG form a complex that acts as a GTP-hydrolysis-dependent molecular chaperone, activating the urease apoprotein by helping to assemble the nickel containing metallocenter of UreC. The UreE protein probably delivers the nickel.

The protein resides in the cytoplasm. In terms of biological role, required for maturation of urease via the functional incorporation of the urease nickel metallocenter. The sequence is that of Urease accessory protein UreD from Rhizobium johnstonii (strain DSM 114642 / LMG 32736 / 3841) (Rhizobium leguminosarum bv. viciae).